The following is a 274-amino-acid chain: Rhamnulose-1-phosphate aldolase (274 aa).

Residue E117 is part of the active site. Residues H141, H143, and H212 each coordinate Zn(2+).

It belongs to the aldolase class II family. RhaD subfamily. In terms of assembly, homotetramer. Requires Zn(2+) as cofactor.

The protein resides in the cytoplasm. It carries out the reaction L-rhamnulose 1-phosphate = (S)-lactaldehyde + dihydroxyacetone phosphate. The protein operates within carbohydrate degradation; L-rhamnose degradation; glycerone phosphate from L-rhamnose: step 3/3. In terms of biological role, catalyzes the reversible cleavage of L-rhamnulose-1-phosphate to dihydroxyacetone phosphate (DHAP) and L-lactaldehyde. The protein is Rhamnulose-1-phosphate aldolase of Shigella boydii serotype 4 (strain Sb227).